The sequence spans 500 residues: Trehalose-6-phosphate synthase (500 aa).

Arg-28 is a binding site for D-glucose 6-phosphate. 48–49 (GG) serves as a coordination point for UDP-alpha-D-glucose. 2 residues coordinate D-glucose 6-phosphate: Tyr-104 and Asp-158. Arg-300 and Lys-305 together coordinate UDP-alpha-D-glucose. Position 338 (Arg-338) interacts with D-glucose 6-phosphate. 403-407 (LVAKE) is a UDP-alpha-D-glucose binding site.

It belongs to the glycosyltransferase 20 family. As to quaternary structure, homotetramer.

The catalysed reaction is ADP-alpha-D-glucose + D-glucose 6-phosphate = alpha,alpha-trehalose 6-phosphate + ADP + H(+). It carries out the reaction CDP-alpha-D-glucose + D-glucose 6-phosphate = alpha,alpha-trehalose 6-phosphate + CDP + H(+). It catalyses the reaction GDP-alpha-D-glucose + D-glucose 6-phosphate = alpha,alpha-trehalose 6-phosphate + GDP + H(+). The enzyme catalyses TDP-alpha-D-glucose + D-glucose 6-phosphate = 5-methyl-UDP + alpha,alpha-trehalose 6-phosphate + H(+). The catalysed reaction is D-glucose 6-phosphate + UDP-alpha-D-glucose = alpha,alpha-trehalose 6-phosphate + UDP + H(+). The protein operates within glycan biosynthesis; trehalose biosynthesis. In terms of biological role, probably involved in the osmoprotection via the biosynthesis of trehalose and in the production of glycogen and alpha-glucan via the TreS-Pep2 branch involved in the biosynthesis of maltose-1-phosphate (M1P). Catalyzes the transfer of glucose from UDP-glucose (UDP-Glc) to D-glucose 6-phosphate (Glc-6-P) to form trehalose-6-phosphate. Probably also able to use ADP-Glc, CDP-Glc, GDP-Glc and TDP-Glc as glucosyl donors. In Mycobacterium marinum (strain ATCC BAA-535 / M), this protein is Trehalose-6-phosphate synthase.